Consider the following 426-residue polypeptide: Tubby protein homolog 1 (426 aa).

Residues 16-28 (QRKMLEDKQKQKR) are required for localization to cilia in AWB sensory neurons. Positions 19-39 (MLEDKQKQKRHQSAGSVRTTS) are disordered.

It belongs to the TUB family. Interacts with rgb-3. In terms of tissue distribution, expressed in ciliated sensory neurons.

It localises to the cytoplasm. The protein resides in the cell projection. Its subcellular location is the axon. The protein localises to the dendrite. It is found in the cilium. In terms of biological role, has a role in fat regulation independent of daf-16. Implicated in ciliar sensory function which is required for normal sensory behavior such as chemotaxis. Required for extension and growth of sensory neuronal cilia during postembryonic development, potentially via mediating signaling protein transport and localization of PI(4,5)P2 to the ciliary base. Functions in life span control via the insulin/IGF-1 pathway. Thought to be involved in neuronal trafficking. This chain is Tubby protein homolog 1, found in Caenorhabditis elegans.